We begin with the raw amino-acid sequence, 525 residues long: Vesicular inhibitory amino acid transporter (525 aa).

Topologically, residues 1–132 are cytoplasmic; it reads MATLLRSKLT…WNVTNAIQGM (132 aa). Residues 133 to 153 traverse the membrane as a helical segment; sequence FVLGLPYAILHGGYLGLFLII. The Lumenal, vesicle segment spans residues 154–204; it reads FAAVVCCYTGKILIACLYEENEDGEVVRVRDSYVAIANACCAPRFPTLGGR. Position 186 is a 3'-nitrotyrosine (Y186). The chain crosses the membrane as a helical span at residues 205-225; it reads VVNVAQIIELVMTCILYVVVS. The Cytoplasmic segment spans residues 226 to 265; it reads GNLMYNSFPGLPVSQKSWSIIATAVLLPCAFLKNLKAVSK. The chain crosses the membrane as a helical span at residues 266-286; that stretch reads FSLLCTLAHFVINILVIAYCL. The Lumenal, vesicle segment spans residues 287–305; sequence SRARDWAWEKVKFYIDVKK. A helical transmembrane segment spans residues 306–326; the sequence is FPISIGIIVFSYTSQIFLPSL. The Cytoplasmic portion of the chain corresponds to 327 to 341; it reads EGNMQQPSEFHCMMN. A helical transmembrane segment spans residues 342 to 362; it reads WTHIAACVLKGLFALVAYLTW. The Lumenal, vesicle segment spans residues 363–383; that stretch reads ADETKEVITDNLPGSIRAVVN. Residues 384–404 traverse the membrane as a helical segment; sequence LFLVAKALLSYPLPFFAAVEV. Over 405-438 the chain is Cytoplasmic; sequence LEKSLFQEGSRAFFPACYGGDGRLKSWGLTLRCA. The helical transmembrane segment at 439–459 threads the bilayer; that stretch reads LVVFTLLMAIYVPHFALLMGL. At 460–461 the chain is on the lumenal, vesicle side; sequence TG. A helical membrane pass occupies residues 462-482; it reads SLTGAGLCFLLPSLFHLRLLW. The Cytoplasmic portion of the chain corresponds to 483–489; it reads RKLLWHQ. A helical transmembrane segment spans residues 490-510; that stretch reads VFFDVAIFVIGGICSVSGFVH. Residues 511–525 lie on the Lumenal, vesicle side of the membrane; the sequence is SLEGLIEAYRTNAED.

It belongs to the amino acid/polyamine transporter 2 family. In terms of tissue distribution, brain and retina. Localized in horizontal cell tips at both rod and cone terminals.

The protein localises to the cytoplasmic vesicle membrane. Its subcellular location is the presynapse. It carries out the reaction 4-aminobutanoate(out) + n H(+)(in) = 4-aminobutanoate(in) + n H(+)(out). The enzyme catalyses glycine(out) + n H(+)(in) = glycine(in) + n H(+)(out). The catalysed reaction is beta-alanine(out) + n H(+)(in) = beta-alanine(in) + n H(+)(out). With respect to regulation, chloride ions activate 4-aminobutanoate/H(+) transport. Its function is as follows. Antiporter that exchanges vesicular protons for cytosolic 4-aminobutanoate or to a lesser extend glycine, thus allowing their secretion from nerve terminals. The transport is equally dependent on the chemical and electrical components of the proton gradient. May also transport beta-alanine. Acidification of GABAergic synaptic vesicles is a prerequisite for 4-aminobutanoate uptake. This is Vesicular inhibitory amino acid transporter from Mus musculus (Mouse).